Here is a 273-residue protein sequence, read N- to C-terminus: MAIVKCKPTSAGRRHVVKVVNAELHKGKPYAPLLDSKSKTGGRNNLGRITTRHIGGGHKQHYRLVDFKRNKLDIPAVVERLEYDPNRSANIALVLYKDGERRYILAPKGLSVGDTIQAGVSAPIKAGNALPMRNIPVGTTVHNVELKPGKGGQIARSAGAYVQIIAREGNYVTLRLRSGEMRKVLAECTATIGEVGNSEHMLRVLGKAGANRWRGVRPTVRGTAMNPVDHPHGGGEGRNFGKHPVTPWGVQTKGKKTRHNKRTDKYIVRRRGK.

2 disordered regions span residues 31-50 (APLL…GRIT) and 221-273 (RGTA…RRGK). Over residues 253–273 (KGKKTRHNKRTDKYIVRRRGK) the composition is skewed to basic residues.

The protein belongs to the universal ribosomal protein uL2 family. Part of the 50S ribosomal subunit. Forms a bridge to the 30S subunit in the 70S ribosome.

In terms of biological role, one of the primary rRNA binding proteins. Required for association of the 30S and 50S subunits to form the 70S ribosome, for tRNA binding and peptide bond formation. It has been suggested to have peptidyltransferase activity; this is somewhat controversial. Makes several contacts with the 16S rRNA in the 70S ribosome. This Actinobacillus pleuropneumoniae serotype 7 (strain AP76) protein is Large ribosomal subunit protein uL2.